A 162-amino-acid chain; its full sequence is Interleukin-15 (162 aa).

An N-terminal signal peptide occupies residues methionine 1–alanine 29. The propeptide occupies glycine 30–alanine 48. 2 disulfide bridges follow: cysteine 83–cysteine 133 and cysteine 90–cysteine 136. An N-linked (GlcNAc...) asparagine glycan is attached at asparagine 108.

Belongs to the IL-15/IL-21 family.

The protein localises to the secreted. Its function is as follows. Cytokine that plays a major role in the development of inflammatory and protective immune responses to microbial invaders and parasites by modulating immune cells of both the innate and adaptive immune systems. Stimulates the proliferation of natural killer cells, T-cells and B-cells and promotes the secretion of several cytokines. In monocytes, induces the production of IL8 and monocyte chemotactic protein 1/CCL2, two chemokines that attract neutrophils and monocytes respectively to sites of infection. Unlike most cytokines, which are secreted in soluble form, IL15 is expressed in association with its high affinity IL15RA on the surface of IL15-producing cells and delivers signals to target cells that express IL2RB and IL2RG receptor subunits. Binding to its receptor triggers the phosphorylation of JAK1 and JAK3 and the recruitment and subsequent phosphorylation of signal transducer and activator of transcription-3/STAT3 and STAT5. In mast cells, induces the rapid tyrosine phosphorylation of STAT6 and thereby controls mast cell survival and release of cytokines such as IL4. This is Interleukin-15 (IL15) from Ailuropoda melanoleuca (Giant panda).